A 258-amino-acid polypeptide reads, in one-letter code: MADVVTMKQLLEAGVHFGHQTRRWNPKMAPYIFTQRNGIYIIDLQKTIKMLDDAYNFMKAVAEDGGVFLFVGTKKQAQDSIAEEATRAGQYYVNQRWLGGTLTNWTTIQSRVRRLKQLKEMSEDGTFDVLPKKEVALLTKEMDKLERFLGGIEDMPRIPDVLFVVDPKKEKIAVHEANILGIPVVAMVDTNTDPDPIDVVIPSNDDAIRAIRLIAGAMADAIIEGKQGQDDEETLEVDFKENADGSEEIVSAEENPED.

The segment at 226–258 (KQGQDDEETLEVDFKENADGSEEIVSAEENPED) is disordered. Residues 244–258 (DGSEEIVSAEENPED) are compositionally biased toward acidic residues.

It belongs to the universal ribosomal protein uS2 family.

In Lactobacillus acidophilus (strain ATCC 700396 / NCK56 / N2 / NCFM), this protein is Small ribosomal subunit protein uS2.